We begin with the raw amino-acid sequence, 533 residues long: MSDSTMDTQLALLVWGIAVCVTLAIVVPRWIGNNSKEPPSLGGSMLSNTYQYMTDMHGFLQRVASAQRSSKIIKFRLGPKKIYMVSGEKNIQAINRPSHSISPDVFFLEVMANVWGASKEEVGKFKQDQSGRSKNPVPGHDVKPGQPRLWHGQHRVYSEYLQRTDHANALSNKYFQLFSERLTKQPLGDWTELRLSHFFESDMAEAALVALMGPRIVELNPGFWPTMWEFARLAPRLMWGLPRWVNPKPWEIRELFHGMCRRYVDAAKREFDWNGPDVDAGWEPHYGSRMARELISWAEKNLSPETTAGMVATFIFGTNANSVPMSTWAMMELIADPELYHAVREECLAASTLDPATGERVFDTQKLLSMPLLQSVYIETLRLHVSINVTREVTQPISLDGHVLTPGSLIQAPSQIGQYSEVWGCDGHPASQFWAGRHLKHDSGRPEFTMAGRTASFFPFGGGPSICPGRVFAKQEILMTVAALVTRFEIELIEWTHPDGSKSDRPAQNDQSYIGAVGIPPDRDMKVRWKRLW.

A helical transmembrane segment spans residues 8–28 (TQLALLVWGIAVCVTLAIVVP). The N-linked (GlcNAc...) asparagine glycan is linked to N33. Residues 123 to 148 (GKFKQDQSGRSKNPVPGHDVKPGQPR) form a disordered region. N388 carries N-linked (GlcNAc...) asparagine glycosylation. C467 is a binding site for heme.

Belongs to the cytochrome P450 family. It depends on heme as a cofactor.

The protein localises to the membrane. It functions in the pathway secondary metabolite biosynthesis. Its function is as follows. Cytochrome P450 monooxygenase; part of the gene cluster that mediates the biosynthesis of calbistrin A and related compounds. Calbistrin A is a secondary metabolite with an interesting structure that was recently found to have bioactivity against leukemia cells. It consists of two polyketides linked by an ester bond: a bicyclic decalin containing polyketide and a linear 12 carbon dioic acid structure. The polyketide synthase calA is probably responsible for forming the decalin moiety. Because calA lacks a designated enoylreductase (ER) domain, the required activity is provided by the trans-enoyl reductase calK. Following release from the PKS, calF then probably catalyzes the oxidation and the subsequent Diels Alder cycloisomerization that lead to the formation of the decalin moiety. The decalin polyketide backbone includes two C-methyl groups, at C7 and C11 in backbone, of which the C7 position is probably methylated by the methyltransferase domain of calA. A candidate for adding the methyl group at C11, if not done by CalA, is the cluster methyltransferase calH. Several additional tailoring enzymes within the cluster could be involved in the modification of the decalin polyketide product. Those include the 3 cytochrome P450 monooxygenases CalE, CalG and CalL, of which one might be responsible for the introduction of the extra hydroxyl group attached to the backbone of the decalin moiety, at position C9 in the backbone, that allows for attachment of the linear moiety. One tailoring enzyme activity that is expected to be involved in biosynthesis of calbistrin is an acyltransferase for connecting the two polyketide synthase products, and which could be performed by the cluster acyltransferase calJ. The enzyme responsible for the biosynthesis of the linear moiety, probably a second PKS, has not been identified yet. In Penicillium decumbens, this protein is Cytochrome P450 monooxygenase calL.